Consider the following 415-residue polypeptide: MSTAVTNWAGNITYTAKEVHRPATAEELADVVARSAWGACAGAAGHSFNEIADPGPDGVLLRLDALPAETDVDTTARTVRVGGGVRYAELARVVHAHGLALPNMASLPHISVAGSVATGTHGSGVTNGPLAAPVREVELVTADGSQVRIAPGERRFGGAVTSLGALGVVTALTLDLEPAFEVGQHLFTELPLRGLDFETVAAAGYSVSLFTDWREPGFRQVWLKRRTDQELPDFPWARPATVALHPVPGMPAENCTQQFGVPGPWHERLPHFRAEFTPSSGAELQSEYLLPRAHALDALDAVDRIRDTVAPVLQTCEVRTVAPDEQWLGPSHGRDTVALHFTWVKDTEAVLPVVRRLEEALDAFDPRPHWGKVFTTSAAALRARYPRLADFRALARELDPSGKFTNTFLRDLLDG.

In terms of domain architecture, FAD-binding PCMH-type spans 12 to 179 (ITYTAKEVHR…TALTLDLEPA (168 aa)). Histidine 46 bears the Pros-8alpha-FAD histidine mark. FAD-binding positions include serine 106, serine 111, glycine 114, 118-121 (TGTH), and valine 169. Serine 106 contributes to the xylitol binding site. The xylitol site is built by glutamate 317, arginine 319, and threonine 342. FAD is bound at residue arginine 319. Histidine 369 contributes to the FAD binding site. Lysine 372 lines the xylitol pocket.

Belongs to the oxygen-dependent FAD-linked oxidoreductase family. As to quaternary structure, monomer. It depends on FAD as a cofactor.

It catalyses the reaction an alditol + O2 = an aldose + H2O2. The enzyme catalyses xylitol + O2 = D-xylose + H2O2. The catalysed reaction is D-sorbitol + O2 = D-glucose + H2O2. Its function is as follows. Oxidase that performs selective oxidation of the terminal primary hydroxyl group of several alditols, with a reduction of O2 to H2O2. Shows highest activity on xylitol and D-sorbitol, and to a lesser extent, can also use galactitol, D-mannitol, and D-arabitol as substrates in vitro. Is not active on D-glucose, D-xylose, D-galactose, D-mannose, D-fructose, L-sorbose, L-fucose, myoinositol, glycerol, ethyl alcohol, and meso-erythritol. This is Alditol oxidase from Streptomyces sp. (strain IKD472 / FERM P-14339).